The following is a 954-amino-acid chain: Alpha-xylosidase BoGH31A (954 aa).

A signal peptide spans 1-20 (MIMNMKNIFYCLLPGLLLGA). Cys-21 is lipidated: N-palmitoyl cysteine. A lipid anchor (S-diacylglycerol cysteine) is attached at Cys-21. The region spanning 227–366 (TGQEGALTGT…NPEEQGKQSW (140 aa)) is the PA14 domain. Catalysis depends on residues Asp-553 and Glu-556. Residue Asp-630 is the Proton donor of the active site.

It belongs to the glycosyl hydrolase 31 family.

The protein resides in the cell inner membrane. The catalysed reaction is Hydrolysis of terminal, non-reducing alpha-D-xylose residues with release of alpha-D-xylose.. It functions in the pathway glucan metabolism; xyloglucan degradation. Catalyzes the liberation of alpha-xylose from the non-reducing terminal glucose of xyloglucan oligosaccharides in xyloglucan degradation, converting the 'X' to 'G' units. This chain is Alpha-xylosidase BoGH31A, found in Bacteroides ovatus (strain ATCC 8483 / DSM 1896 / JCM 5824 / BCRC 10623 / CCUG 4943 / NCTC 11153).